The chain runs to 193 residues: 7-methyl-GTP pyrophosphatase (193 aa).

Catalysis depends on Asp-70, which acts as the Proton acceptor.

The protein belongs to the Maf family. YceF subfamily. The cofactor is a divalent metal cation.

The protein resides in the cytoplasm. The catalysed reaction is N(7)-methyl-GTP + H2O = N(7)-methyl-GMP + diphosphate + H(+). Nucleoside triphosphate pyrophosphatase that hydrolyzes 7-methyl-GTP (m(7)GTP). May have a dual role in cell division arrest and in preventing the incorporation of modified nucleotides into cellular nucleic acids. This chain is 7-methyl-GTP pyrophosphatase, found in Vibrio cholerae serotype O1 (strain ATCC 39315 / El Tor Inaba N16961).